Here is a 59-residue protein sequence, read N- to C-terminus: Large ribosomal subunit protein bL32 (59 aa).

The disordered stretch occupies residues 1 to 28; sequence MAVQQNKKSPSKRGMHRAHDFLTDPPLA.

Belongs to the bacterial ribosomal protein bL32 family.

This is Large ribosomal subunit protein bL32 from Aromatoleum aromaticum (strain DSM 19018 / LMG 30748 / EbN1) (Azoarcus sp. (strain EbN1)).